We begin with the raw amino-acid sequence, 252 residues long: Small ribosomal subunit protein uS2 (252 aa).

The segment at 231 to 252 (SVESTAQEQVEETAQEETAVEA) is disordered. Residues 239–252 (QVEETAQEETAVEA) show a composition bias toward acidic residues.

This sequence belongs to the universal ribosomal protein uS2 family.

The chain is Small ribosomal subunit protein uS2 from Acetivibrio thermocellus (strain ATCC 27405 / DSM 1237 / JCM 9322 / NBRC 103400 / NCIMB 10682 / NRRL B-4536 / VPI 7372) (Clostridium thermocellum).